A 166-amino-acid polypeptide reads, in one-letter code: Phosphodiesterase MJ0936 (166 aa).

Mn(2+)-binding residues include Asp8, His10, Asp36, Asn59, His97, His120, and His122. Ni(2+) is bound by residues Asp8, His10, Asp36, Asn59, His97, His120, and His122.

It belongs to the metallophosphoesterase superfamily. YfcE family. Monomer. It depends on Ni(2+) as a cofactor. Mn(2+) serves as cofactor.

Competitively inhibited by phosphate. Its function is as follows. Shows phosphodiesterase activity. Hydrolyzes phosphodiesters bonds in the artificial chromogenic substrates bis-p-nitrophenyl phosphate (bis-pNPP), and less efficiently thymidine 5'-monophosphate p-nitrophenyl ester (pNP-TMP) and p-nitrophenylphosphorylcholine (pNPPC). No catalytic activity was found toward cAMP or cGMP, nucleotides or phospholipase substrates such as phosphatidylcholine. The physiological substrate is unknown. This chain is Phosphodiesterase MJ0936, found in Methanocaldococcus jannaschii (strain ATCC 43067 / DSM 2661 / JAL-1 / JCM 10045 / NBRC 100440) (Methanococcus jannaschii).